The primary structure comprises 482 residues: Major cardiolipin synthase ClsA (482 aa).

The next 2 helical transmembrane spans lie at 3–23 and 34–54; these read ISSI…IIVI and WAWL…YLLF. 2 consecutive PLD phosphodiesterase domains span residues 217 to 244 and 395 to 422; these read LNYR…GDEY and DNGF…DVRS. Catalysis depends on residues His222, Lys224, Asp229, His400, Lys402, and Asp407.

This sequence belongs to the phospholipase D family. Cardiolipin synthase subfamily.

It localises to the cell membrane. It carries out the reaction 2 a 1,2-diacyl-sn-glycero-3-phospho-(1'-sn-glycerol) = a cardiolipin + glycerol. Functionally, catalyzes the reversible phosphatidyl group transfer from one phosphatidylglycerol molecule to another to form cardiolipin (CL) (diphosphatidylglycerol) and glycerol. This Bacillus subtilis (strain 168) protein is Major cardiolipin synthase ClsA (clsA).